Reading from the N-terminus, the 370-residue chain is sn-glycerol-3-phosphate import ATP-binding protein UgpC (370 aa).

In terms of domain architecture, ABC transporter spans 4–235 (LRLDGIRKRY…PATRFVASFL (232 aa)). 37-44 (GPSGCGKS) is an ATP binding site.

The protein belongs to the ABC transporter superfamily. sn-glycerol-3-phosphate importer (TC 3.A.1.1.3) family. The complex is composed of two ATP-binding proteins (UgpC), two transmembrane proteins (UgpA and UgpE) and a solute-binding protein (UgpB).

The protein resides in the cell inner membrane. The catalysed reaction is sn-glycerol 3-phosphate(out) + ATP + H2O = sn-glycerol 3-phosphate(in) + ADP + phosphate + H(+). Functionally, part of the ABC transporter complex UgpBAEC involved in sn-glycerol-3-phosphate (G3P) import. Responsible for energy coupling to the transport system. This Chromohalobacter salexigens (strain ATCC BAA-138 / DSM 3043 / CIP 106854 / NCIMB 13768 / 1H11) protein is sn-glycerol-3-phosphate import ATP-binding protein UgpC.